A 295-amino-acid chain; its full sequence is uncharacterized protein (295 aa).

The signal sequence occupies residues 1–19; that stretch reads MRKLLLIITVFFTFNVAQA.

This is an uncharacterized protein from Rickettsia conorii (strain ATCC VR-613 / Malish 7).